The primary structure comprises 516 residues: uncharacterized protein (516 aa).

5 helical membrane passes run 10-27 (IRYPELALFLVIAAGYWI), 32-54 (IGAFSLGPVTGALFAGLVVGDFA), 64-83 (SFLFLLFLFGVGYSVGPQFV), 95-117 (LLAVVVCLTGLAAAIAVGRILGL), and 165-187 (AVCYIFGYAGVIMWCTVVAPALL). RCK C-terminal domains lie at 208–291 (KPGL…SRAE) and 296–376 (RELL…NIGV). The next 4 membrane-spanning stretches (helical) occupy residues 386–408 (FVVLGLAIFFGGVVGVLVSFPVG), 412–430 (IALSTSVGTLLAGLLVGHL), 443–465 (GAISLMTSLGLAAFVGLTGIHAG), and 480–502 (LLGGMVVTLLPQIVGFCFGHFVL).

Belongs to the AAE transporter (TC 2.A.81) family.

Its subcellular location is the cell membrane. This is an uncharacterized protein from Bradyrhizobium diazoefficiens (strain JCM 10833 / BCRC 13528 / IAM 13628 / NBRC 14792 / USDA 110).